The primary structure comprises 524 residues: MSDKEAGVASSLGSNSPINKDEVDVKNTEEHSKQESKSDINKPPLKKIKADDGIDISDSFSRRENKGNNKVISSVYNDENKKTPAWMKSKTTDKYDKYGSRSTPIATPTAPVNNPDERYSKYMTNSVNSNDRVRRPPTETTSSQYDKKRAHDEAEDDVVAPYSNLAVANPSSNLYQTFQSHINNREGKDINSIVRSHYNQRTQQSKFQGSRTKSPIYKLRNFNNAIKYILLGNWVKPNPDSNRPTVILDLCCGKGGDLNKCEFVSVDQYIGIDISDASIKEAFSRYSRNKARFIPQTAESKKERDTRRYNFEACFATGDCFSSSIPEILEPNFPGIIDGLFPVDCVSLQFAMHYAFETEEKVHQLLTNVTKSLRAGGTLIGTIPSSDFIRDKIVNRAFIDQENRKFGNDLYSVTFHKDPPDEGVFRPPFGNGYNYSLKDAIDDVPEYVVPFEVFRGLCEEYGLVLKYKKNFIDIFNQEIPKYFSKLNKNLIEGMKRSDGKYGAEGLEKEAVGFYIGFVFEKLGN.

Positions 1–155 are disordered; that stretch reads MSDKEAGVAS…DKKRAHDEAE (155 aa). Over residues 19 to 40 the composition is skewed to basic and acidic residues; sequence NKDEVDVKNTEEHSKQESKSDI. Over residues 68 to 77 the composition is skewed to polar residues; that stretch reads NNKVISSVYN. The segment covering 90–99 has biased composition (basic and acidic residues); the sequence is KTTDKYDKYG. Positions 100-112 are enriched in polar residues; that stretch reads SRSTPIATPTAPV. Positions 214–522 constitute an mRNA cap 0 methyltransferase domain; it reads SPIYKLRNFN…FYIGFVFEKL (309 aa). Residue 223–224 participates in mRNA binding; that stretch reads NN. The S-adenosyl-L-methionine site is built by lysine 227, cysteine 251, aspartate 273, aspartate 319, glutamine 349, and tyrosine 354.

It belongs to the class I-like SAM-binding methyltransferase superfamily. mRNA cap 0 methyltransferase family.

Its subcellular location is the nucleus. The catalysed reaction is a 5'-end (5'-triphosphoguanosine)-ribonucleoside in mRNA + S-adenosyl-L-methionine = a 5'-end (N(7)-methyl 5'-triphosphoguanosine)-ribonucleoside in mRNA + S-adenosyl-L-homocysteine. Its function is as follows. Responsible for methylating the 5'-cap structure of mRNAs. The protein is mRNA cap guanine-N(7) methyltransferase (ABD1) of Debaryomyces hansenii (strain ATCC 36239 / CBS 767 / BCRC 21394 / JCM 1990 / NBRC 0083 / IGC 2968) (Yeast).